A 359-amino-acid chain; its full sequence is Ribosomal RNA small subunit methyltransferase mra1 (359 aa).

Residues methionine 1–arginine 10 are compositionally biased toward basic residues. Disordered regions lie at residues methionine 1–glutamate 62 and valine 98–arginine 118. Serine 12 bears the Phosphoserine mark. Over residues lysine 18–threonine 39 the composition is skewed to polar residues. At threonine 33 the chain carries Phosphothreonine. Position 100 is a phosphoserine (serine 100). S-adenosyl-L-methionine-binding positions include leucine 287, glycine 314, glycine 319–aspartate 321, and isoleucine 334–leucine 339.

This sequence belongs to the class IV-like SAM-binding methyltransferase superfamily. RNA methyltransferase NEP1 family. Homodimer.

The protein localises to the nucleus. The protein resides in the nucleolus. It catalyses the reaction a pseudouridine in rRNA + S-adenosyl-L-methionine = an N(1)-methylpseudouridine in rRNA + S-adenosyl-L-homocysteine + H(+). Functionally, S-adenosyl-L-methionine-dependent pseudouridine N(1)-methyltransferase that methylates the pseudouridine corresponding to position 1189 (Psi1189) in S.cerevisiae 18S rRNA. Involved the biosynthesis of the hypermodified N1-methyl-N3-(3-amino-3-carboxypropyl) pseudouridine (m1acp3-Psi) conserved in eukaryotic 18S rRNA. Also has an essential role in 40S ribosomal subunit biogenesis independent on its methyltransferase activity, facilitating the incorporation of ribosomal protein S19 during the formation of pre-ribosomes. Essential for cell growth. It also has a key role in promoting the mating function. The chain is Ribosomal RNA small subunit methyltransferase mra1 from Schizosaccharomyces pombe (strain 972 / ATCC 24843) (Fission yeast).